Reading from the N-terminus, the 539-residue chain is Phosphoenolpyruvate carboxykinase (ATP) (539 aa).

Arg-59, Tyr-200, and Lys-206 together coordinate substrate. ATP-binding positions include Lys-206, His-225, and 242–250 (GLSGTGKTT). Lys-206 and His-225 together coordinate Mn(2+). Asp-263 is a Mn(2+) binding site. Residues Glu-291, Arg-327, 447 to 448 (RI), and Thr-453 each bind ATP. Arg-327 contacts substrate.

The protein belongs to the phosphoenolpyruvate carboxykinase (ATP) family. Mn(2+) serves as cofactor.

The protein resides in the cytoplasm. It catalyses the reaction oxaloacetate + ATP = phosphoenolpyruvate + ADP + CO2. It functions in the pathway carbohydrate biosynthesis; gluconeogenesis. Its function is as follows. Involved in the gluconeogenesis. Catalyzes the conversion of oxaloacetate (OAA) to phosphoenolpyruvate (PEP) through direct phosphoryl transfer between the nucleoside triphosphate and OAA. The protein is Phosphoenolpyruvate carboxykinase (ATP) of Selenomonas ruminantium.